A 637-amino-acid polypeptide reads, in one-letter code: Anthranilate synthase, phenazine specific (637 aa).

An anthranilate synthase component I region spans residues 1–434 (MSQTAAHLME…QREQIQADFS (434 aa)). Residues 437–628 (QVLIVDAEDT…LRHALIHTPV (192 aa)) enclose the Glutamine amidotransferase type-1 domain. Residues Cys517, His602, and Glu604 each act as for GATase activity in the active site.

It carries out the reaction chorismate + L-glutamine = anthranilate + pyruvate + L-glutamate + H(+). The protein operates within antibiotic biosynthesis; phenazine biosynthesis. Involved in the biosynthesis of the antibiotic, phenazine, a nitrogen-containing heterocyclic molecule having important roles in virulence, competition and biological control. This chain is Anthranilate synthase, phenazine specific (phzB), found in Pseudomonas chlororaphis (Pseudomonas aureofaciens).